The sequence spans 248 residues: 5'-nucleotidase SurE (248 aa).

The a divalent metal cation site is built by Asp8, Asp9, Ser39, and Asn91.

The protein belongs to the SurE nucleotidase family. The cofactor is a divalent metal cation.

The protein resides in the cytoplasm. The enzyme catalyses a ribonucleoside 5'-phosphate + H2O = a ribonucleoside + phosphate. Nucleotidase that shows phosphatase activity on nucleoside 5'-monophosphates. This chain is 5'-nucleotidase SurE, found in Neisseria meningitidis serogroup C / serotype 2a (strain ATCC 700532 / DSM 15464 / FAM18).